We begin with the raw amino-acid sequence, 974 residues long: Translation initiation factor IF-2 (974 aa).

Disordered regions lie at residues 67–86 (TRKHTSEIKQSDATGKARTI), 101–133 (DVAEGAEQGQAQVAEADDDAELKRREEEARREA), and 146–385 (RQER…TFQA). Residues 105–114 (GAEQGQAQVA) are compositionally biased toward low complexity. Composition is skewed to basic and acidic residues over residues 121–133 (ELKRREEEARREA) and 146–181 (RQERLEREEAERRAREEAAEAERRRAEEEAAAKRAA). The segment covering 182–197 (AEAAAAQQAAAQQAAE) has biased composition (low complexity). Over residues 210–261 (EEARAAAERAAQREAAKKAEDAAREAADKARAEQEEIRKRREAAEAEARAIR) the composition is skewed to basic and acidic residues. Positions 313-329 (PAGATPATTQAPAAGAG) are enriched in low complexity. Residues 358-371 (SSGGVDRGWRGGPK) are compositionally biased toward gly residues. Residues 474-643 (PRPPVVTVMG…LLQAEVLELK (170 aa)) form the tr-type G domain. The segment at 483–490 (GHVDHGKT) is G1. Residue 483-490 (GHVDHGKT) coordinates GTP. The interval 508 to 512 (GITQH) is G2. A G3 region spans residues 529–532 (DTPG). Residues 529-533 (DTPGH) and 583-586 (NKID) contribute to the GTP site. Residues 583-586 (NKID) are G4. Residues 619 to 621 (SAK) are G5.

This sequence belongs to the TRAFAC class translation factor GTPase superfamily. Classic translation factor GTPase family. IF-2 subfamily.

The protein resides in the cytoplasm. Its function is as follows. One of the essential components for the initiation of protein synthesis. Protects formylmethionyl-tRNA from spontaneous hydrolysis and promotes its binding to the 30S ribosomal subunits. Also involved in the hydrolysis of GTP during the formation of the 70S ribosomal complex. This Burkholderia vietnamiensis (strain G4 / LMG 22486) (Burkholderia cepacia (strain R1808)) protein is Translation initiation factor IF-2.